A 505-amino-acid polypeptide reads, in one-letter code: Glutamate--tRNA ligase (505 aa).

The 'HIGH' region signature appears at 12-22; sequence PSPTGDPHVGT. Positions 253-257 match the 'KMSKS' region motif; that stretch reads KLSKR. Lysine 256 serves as a coordination point for ATP.

Belongs to the class-I aminoacyl-tRNA synthetase family. Glutamate--tRNA ligase type 1 subfamily. In terms of assembly, monomer.

The protein localises to the cytoplasm. It carries out the reaction tRNA(Glu) + L-glutamate + ATP = L-glutamyl-tRNA(Glu) + AMP + diphosphate. In terms of biological role, catalyzes the attachment of glutamate to tRNA(Glu) in a two-step reaction: glutamate is first activated by ATP to form Glu-AMP and then transferred to the acceptor end of tRNA(Glu). The protein is Glutamate--tRNA ligase of Chlamydophila psittaci (strain ATCC VR-125 / 6BC) (Chlamydia psittaci).